Reading from the N-terminus, the 175-residue chain is Nascent polypeptide-associated complex subunit beta (175 aa).

Disordered regions lie at residues 1 to 36 and 129 to 175; these read MDKE…SQGD and RQAA…EELE. The 68-residue stretch at 34–101 folds into the NAC-A/B domain; it reads QGDDRKLQAA…GQTKELTELV (68 aa). Residues 149–163 are compositionally biased toward acidic residues; that stretch reads EGDDEIPDLVDNFDE. The segment covering 164 to 175 has biased composition (basic and acidic residues); it reads AEVKKSDLEELE.

It belongs to the NAC-beta family. In terms of assembly, part of the nascent polypeptide-associated complex (NAC), consisting of EGD2 and EGD1. NAC associates with ribosomes via EGD1.

The protein localises to the cytoplasm. The protein resides in the nucleus. In terms of biological role, component of the nascent polypeptide-associated complex (NAC), a dynamic component of the ribosomal exit tunnel, protecting the emerging polypeptides from interaction with other cytoplasmic proteins to ensure appropriate nascent protein targeting. The NAC complex also promotes mitochondrial protein import by enhancing productive ribosome interactions with the outer mitochondrial membrane and blocks the inappropriate interaction of ribosomes translating non-secretory nascent polypeptides with translocation sites in the membrane of the endoplasmic reticulum. EGD1 may act as a transcription factor that exert a negative effect on the expression of several genes that are transcribed by RNA polymerase II. The sequence is that of Nascent polypeptide-associated complex subunit beta (EGD1) from Cryptococcus neoformans var. neoformans serotype D (strain B-3501A) (Filobasidiella neoformans).